A 410-amino-acid chain; its full sequence is Argininosuccinate synthase (410 aa).

ATP is bound by residues 10–18 and alanine 37; that span reads AYSGGLDTS. Positions 90 and 95 each coordinate L-citrulline. Glycine 120 lines the ATP pocket. L-aspartate-binding residues include threonine 122, asparagine 126, and aspartate 127. Asparagine 126 is a binding site for L-citrulline. Arginine 130, serine 182, serine 191, glutamate 267, and tyrosine 279 together coordinate L-citrulline.

The protein belongs to the argininosuccinate synthase family. Type 1 subfamily. Homotetramer.

It is found in the cytoplasm. It carries out the reaction L-citrulline + L-aspartate + ATP = 2-(N(omega)-L-arginino)succinate + AMP + diphosphate + H(+). Its pathway is amino-acid biosynthesis; L-arginine biosynthesis; L-arginine from L-ornithine and carbamoyl phosphate: step 2/3. The chain is Argininosuccinate synthase from Polynucleobacter asymbioticus (strain DSM 18221 / CIP 109841 / QLW-P1DMWA-1) (Polynucleobacter necessarius subsp. asymbioticus).